Reading from the N-terminus, the 145-residue chain is Large ribosomal subunit protein uL13 (145 aa).

The protein belongs to the universal ribosomal protein uL13 family. In terms of assembly, part of the 50S ribosomal subunit. Interacts weakly with proteins L3 and L6.

Its function is as follows. This protein is one of the early assembly proteins of the 50S ribosomal subunit. Binds to 23S rRNA. This chain is Large ribosomal subunit protein uL13, found in Haloarcula marismortui (strain ATCC 43049 / DSM 3752 / JCM 8966 / VKM B-1809) (Halobacterium marismortui).